The following is a 772-amino-acid chain: Gelsolin (772 aa).

The signal sequence occupies residues 1–17; the sequence is LGALVVALCALSPPARA. The propeptide occupies 18–33; that stretch reads ATASRGAPQARAPQGR. The interval 19-38 is disordered; it reads TASRGAPQARAPQGRVSPMR. An actin-severing region spans residues 41–166; it reads TMVVEHPEFL…YKKGGVASGF (126 aa). A Gelsolin-like 1 repeat occupies 66 to 148; it reads FDLVPVPPNL…VQGFESATFL (83 aa). Tyr-76 is subject to Phosphotyrosine. Ca(2+) is bound by residues Gly-82, Asp-83, Glu-114, Asp-126, Gly-131, and Ala-133. Positions 113-116 are actin-actin interfilament contact point; the sequence is DESG. Position 152 to 159 (152 to 159) interacts with a 1,2-diacyl-sn-glycero-3-phospho-(1D-myo-inositol-4,5-bisphosphate); the sequence is KSGLKYKK. A Ca(2+)-binding site is contributed by Val-162. 178-186 contributes to the a 1,2-diacyl-sn-glycero-3-phospho-(1D-myo-inositol-4,5-bisphosphate) binding site; sequence RLFQVKGRR. The stretch at 188–260 is one Gelsolin-like 2 repeat; it reads VRATEVPVSW…SEEDAEPAGM (73 aa). 2 residues coordinate Ca(2+): Gly-203 and Asp-204. Cysteines 205 and 218 form a disulfide. Glu-226, Asp-276, Glu-319, Asp-320, and Glu-344 together coordinate Ca(2+). One copy of the Gelsolin-like 3 repeat lies at 307–379; sequence DENPFAQGAL…LPEGGETPLF (73 aa). Phosphotyrosine occurs at positions 399 and 455. Positions 424 to 772 are actin-binding, Ca-sensitive; sequence AAQHGMDDDG…LDRAIAELAA (349 aa). Residues 445–526 form a Gelsolin-like 4 repeat; sequence SNKVPVDPAT…VQGKEPAHLM (82 aa). 7 residues coordinate Ca(2+): Gly-461, Asp-462, Glu-492, Asp-504, Gly-509, Pro-511, and Thr-541. Residues 567-632 form a Gelsolin-like 5 repeat; that stretch reads RAVEVIPKAG…AEGSEPDSFW (66 aa). Lys-574 carries the N6-acetyllysine modification. Ca(2+) contacts are provided by Asn-581 and Asp-582. Tyr-593 is modified (phosphotyrosine). Residue Glu-604 coordinates Ca(2+). Tyr-641 carries the post-translational modification Phosphotyrosine. A Gelsolin-like 6 repeat occupies 671–746; sequence VEEVPGELMQ…VKQGFEPPSF (76 aa). Ca(2+) is bound by residues Asp-686, Asp-687, and Glu-709. At Thr-732 the chain carries Phosphothreonine.

Belongs to the villin/gelsolin family. Binds to actin and to fibronectin. Identified in a complex composed of ACTA1, COBL, GSN and TMSB4X. Interacts with the inactive form of EIF2AK2/PKR. Interacts with FLII. Post-translationally, phosphorylated on tyrosine residues in vitro.

It localises to the cytoplasm. The protein localises to the cytoskeleton. Its subcellular location is the secreted. Its function is as follows. Calcium-regulated, actin-modulating protein that binds to the plus (or barbed) ends of actin monomers or filaments, preventing monomer exchange (end-blocking or capping). It can promote the assembly of monomers into filaments (nucleation) as well as sever filaments already formed. Plays a role in ciliogenesis. In Sus scrofa (Pig), this protein is Gelsolin (GSN).